A 236-amino-acid chain; its full sequence is DNA repair protein RecO (236 aa).

It belongs to the RecO family.

In terms of biological role, involved in DNA repair and RecF pathway recombination. This is DNA repair protein RecO from Cellvibrio japonicus (strain Ueda107) (Pseudomonas fluorescens subsp. cellulosa).